The chain runs to 209 residues: Small ribosomal subunit protein uS4 (209 aa).

The S4 RNA-binding domain maps to 99 to 160 (RRLDNVVYRL…GSKEMTLLGQ (62 aa)).

This sequence belongs to the universal ribosomal protein uS4 family. Part of the 30S ribosomal subunit. Contacts protein S5. The interaction surface between S4 and S5 is involved in control of translational fidelity.

One of the primary rRNA binding proteins, it binds directly to 16S rRNA where it nucleates assembly of the body of the 30S subunit. In terms of biological role, with S5 and S12 plays an important role in translational accuracy. In Koribacter versatilis (strain Ellin345), this protein is Small ribosomal subunit protein uS4.